A 165-amino-acid polypeptide reads, in one-letter code: MRIDPSTLDLKEKVVFINRVAKVVKGGRNFRFTALVVVGDENGHVGVGTGKSAEIPEAIRKGIEDAKKNLVEVAIVGTTVPHEIYGEFGTGRVLIMPASEGTGVIAGGPVRAVLELAGLNDVRAKSLGSNNPRNMVNATINGLSRLRTVEQIAALRGKTVEEILG.

Residues 10-73 (LKEKVVFINR…EDAKKNLVEV (64 aa)) form the S5 DRBM domain.

This sequence belongs to the universal ribosomal protein uS5 family. In terms of assembly, part of the 30S ribosomal subunit. Contacts proteins S4 and S8.

Its function is as follows. With S4 and S12 plays an important role in translational accuracy. Located at the back of the 30S subunit body where it stabilizes the conformation of the head with respect to the body. In Clostridium acetobutylicum (strain ATCC 824 / DSM 792 / JCM 1419 / IAM 19013 / LMG 5710 / NBRC 13948 / NRRL B-527 / VKM B-1787 / 2291 / W), this protein is Small ribosomal subunit protein uS5.